The following is a 247-amino-acid chain: MyoD family inhibitor domain-containing protein (247 aa).

Disordered regions lie at residues 1 to 67 (MSCA…NPSA) and 80 to 110 (QLQTSAQEPGKEETGKIKNGGHTRMSNGNGI). The MDFI domain maps to 74–247 (QPERLPQLQT…MECCGICFPS (174 aa)). 2 positions are modified to phosphoserine: Ser129 and Ser141.

Belongs to the MDFI family. In terms of assembly, interacts with HAND1; the interaction sequesters Hand1 into the nucleolus and inhibits its activity. Interacts (via C-terminus) with ZIC2. Interacts (via C-terminus) with AXIN1, the histidine-rich region of CCNT1/cyclin-T and weakly with LEF1. Interacts with CCNT2. Interacts with GATA2. Interacts (via C-terminus) with Piezo channel composed of PIEZO1 or PIEZO2; the interaction prolongs Piezo channel inactivation. Palmitoylated. In terms of tissue distribution, in the embryo, robust expression is detected between 16.5 and 18.5 dpc in lung, kidney, and salivary glands. In the developing cardiovascular system, it is detected in lymphatic and cardiac valves (at protein level).

The protein localises to the cytoplasm. The protein resides in the secreted. Required to control the activity of various transcription factors through their sequestration in the cytoplasm. Retains nuclear Zic proteins ZIC1, ZIC2 and ZIC3 in the cytoplasm and inhibits their transcriptional activation. Modulates the expression from cellular promoters. Binds to the axin complex, resulting in an increase in the level of free beta-catenin. Affects axin-regulation of the WNT and JNK signaling pathways. Involved in the development of lymphatic vessel valves. Required to promote lymphatic endothelial cell migration, in a process that involves down-regulation of integrin beta 1 activation and control of cell adhesion to the extracellular matrix. Regulates the activity of mechanosensitive Piezo channel. The chain is MyoD family inhibitor domain-containing protein from Mus musculus (Mouse).